Here is a 513-residue protein sequence, read N- to C-terminus: MARPRSLVSPLLSGVFCQCDTVGGAPHTHDTPASPSLAAALAADPCGGLVCGGPEHETRLQILFQELDVNKDGGICINDLAVGLKRLGVHRTELELRKIVKAGDKDQDGQLDFEEFVHYLRDHEKKLRLVFKSLDKKNDGRIDAQEIMQSLRDLGVNISEQQAEKILKSMDKNGTMTIDWNEWRDYHLLHPAENIPEIILYWKHSTIFDVGENLLVPDEFTVEEKQTGMWWRHLVAGGGAGAVSRTCTAPLDRLKVLMQVHASRSNNMSMLGGFTQMIREGGIRSLWRGNGINVIKIAPESAIKFMAYEQMKRIIGSDQETLGIHERLVAGSLAGVIAQSSIYPMEVLKTRMALRKTGQYQGMLDCGKKILLKEGVSAFYKGYVPNMLGIIPYAGIDLAVYETLKNAWLQRYATSSADPGVFVLLACGTISSTCGQLASYPLALVRTRMQAEASVEGAPQMTMSKLFKHIVKTEGAFGLYRGLAPNFMKVIPAVSISYVVYENLKLTLGVQSR.

At 1–233 the chain is on the mitochondrial intermembrane side; that stretch reads MARPRSLVSP…EKQTGMWWRH (233 aa). 4 EF-hand domains span residues 55-90, 91-124, 122-157, and 158-193; these read EHETRLQILFQELDVNKDGGICINDLAVGLKRLGVH, RTELELRKIVKAGDKDQDGQLDFEEFVHYLRDHE, DHEKKLRLVFKSLDKKNDGRIDAQEIMQSLRDLGVN, and ISEQQAEKILKSMDKNGTMTIDWNEWRDYHLLHPAE. Ca(2+) is bound by residues Asp-68, Asn-70, Asp-72, Asp-79, Asp-104, Asp-106, Asp-108, Gln-110, and Glu-115. 3 Solcar repeats span residues 228–314, 322–407, and 419–507; these read GMWW…MKRI, LGIH…LKNA, and PGVF…LKLT. The chain crosses the membrane as a helical span at residues 234-251; it reads LVAGGGAGAVSRTCTAPL. Topologically, residues 252–288 are mitochondrial matrix; it reads DRLKVLMQVHASRSNNMSMLGGFTQMIREGGIRSLWR. The helical transmembrane segment at 289–308 threads the bilayer; the sequence is GNGINVIKIAPESAIKFMAY. Residues 309 to 331 are Mitochondrial intermembrane-facing; it reads EQMKRIIGSDQETLGIHERLVAG. The helical transmembrane segment at 332 to 345 threads the bilayer; that stretch reads SLAGVIAQSSIYPM. The Mitochondrial matrix segment spans residues 346-381; sequence EVLKTRMALRKTGQYQGMLDCGKKILLKEGVSAFYK. A helical membrane pass occupies residues 382 to 401; it reads GYVPNMLGIIPYAGIDLAVY. Topologically, residues 402–424 are mitochondrial intermembrane; the sequence is ETLKNAWLQRYATSSADPGVFVL. A helical transmembrane segment spans residues 425–442; it reads LACGTISSTCGQLASYPL. The Mitochondrial matrix segment spans residues 443-481; the sequence is ALVRTRMQAEASVEGAPQMTMSKLFKHIVKTEGAFGLYR. A helical membrane pass occupies residues 482-501; it reads GLAPNFMKVIPAVSISYVVY. Residues 502–513 lie on the Mitochondrial intermembrane side of the membrane; sequence ENLKLTLGVQSR.

The protein belongs to the mitochondrial carrier (TC 2.A.29) family.

It localises to the mitochondrion inner membrane. In terms of biological role, calcium-dependent mitochondrial solute carrier. This is Calcium-binding mitochondrial carrier protein SCaMC-2 (slc25a25) from Xenopus tropicalis (Western clawed frog).